A 386-amino-acid polypeptide reads, in one-letter code: Protein phosphatase methylesterase 1 (386 aa).

Residues 20-48 (ILEKLKGGQEPNSNEEGSDSIGDLPSLKN) are disordered. Active-site residues include Ser-194, Asp-222, and His-348.

The protein belongs to the AB hydrolase superfamily.

The enzyme catalyses [phosphatase 2A protein]-C-terminal L-leucine methyl ester + H2O = [phosphatase 2A protein]-C-terminal L-leucine + methanol + H(+). Functionally, demethylates proteins that have been reversibly carboxymethylated. Demethylates the phosphatase PP2A catalytic subunit. This chain is Protein phosphatase methylesterase 1 (PPE1), found in Candida glabrata (strain ATCC 2001 / BCRC 20586 / JCM 3761 / NBRC 0622 / NRRL Y-65 / CBS 138) (Yeast).